We begin with the raw amino-acid sequence, 132 residues long: MSVNDPLGDMLTRIRNAQLRGKSTVSSPASKLRAWVLDVLQAEGYIRGYEKKETENGQGELVISLKYFEGTPVIRELKRVSKPGRRVYMATKDLPSVRNGLGVSIISTPKGVMSDASARSANVGGEVLCTVF.

The protein belongs to the universal ribosomal protein uS8 family. As to quaternary structure, part of the 30S ribosomal subunit. Contacts proteins S5 and S12.

Functionally, one of the primary rRNA binding proteins, it binds directly to 16S rRNA central domain where it helps coordinate assembly of the platform of the 30S subunit. The sequence is that of Small ribosomal subunit protein uS8 from Cereibacter sphaeroides (strain ATCC 17025 / ATH 2.4.3) (Rhodobacter sphaeroides).